The following is a 2635-amino-acid chain: Protein unc-79 homolog (2635 aa).

2 positions are modified to phosphoserine: S754 and S758. Disordered regions lie at residues 907–929 (GPEG…NCTE), 1538–1575 (IAQR…DARR), 1607–1678 (LIDL…SVLS), 1693–1832 (SKDF…FKIQ), 1863–1909 (LGEQ…TQYR), and 1929–1950 (LEHQ…IQPG). Residues 1666–1678 (SSPSVPSHPSVLS) show a composition bias toward low complexity. Residues 1699-1713 (KDSGNNQSAGNTDSA) are compositionally biased toward polar residues. The span at 1761-1775 (LDDHPDPGTEGEKPG) shows a compositional bias: basic and acidic residues. 2 stretches are compositionally biased toward polar residues: residues 1897–1909 (ETSS…TQYR) and 1929–1947 (LEHQ…TEQI). 2 helical membrane passes run 2223-2243 (LLSF…ELCG) and 2466-2486 (VLHM…TVYC).

Belongs to the unc-79 family. In terms of assembly, NALCN complex consists of NALCN and auxiliary subunits, UNC79, UNC80 and NACL1. These auxiliary subunits are essential for the NALCN channel function. UNC80 bridges NALCN to UNC79.

It is found in the cell membrane. Its function is as follows. Auxiliary subunit of the NALCN sodium channel complex, a voltage-gated ion channel responsible for the resting Na(+) permeability that controls neuronal excitability. Activated by neuropeptides substance P, neurotensin, and extracellular calcium that regulates neuronal excitability by controlling the sizes of NALCN-dependent sodium-leak current. This is Protein unc-79 homolog (UNC79) from Homo sapiens (Human).